The sequence spans 529 residues: HTH-type transcriptional activator Btr (529 aa).

The H-T-H motif DNA-binding region spans 182 to 201; it reads LAQLSQMAGISAKHYSESFK. Residues 268–528 form the Fe/B12 periplasmic-binding domain; the sequence is KIAAYGRGTM…QTVSLLSGDC (261 aa).

Binds with high affinity to both apo-bacillibactin and iron-bacillibactin.

It localises to the cytoplasm. In iron-limited conditions, activates expression of the feuABCybbA operon, which encodes the bacillibactin uptake system. Acts by binding directly to a conserved direct repeat element upstream of the feuA promoter. Activity is increased in the presence of bacillibactin. The polypeptide is HTH-type transcriptional activator Btr (btr) (Bacillus subtilis (strain 168)).